We begin with the raw amino-acid sequence, 608 residues long: UvrABC system protein C (608 aa).

A GIY-YIG domain is found at 18-96 (NQPGVYRMYN…IKKYKPRYNV (79 aa)). The UVR domain maps to 206–241 (KQVIDSLVQHMERASTDLRFEAAARYRDQISALNKV).

This sequence belongs to the UvrC family. Interacts with UvrB in an incision complex.

It is found in the cytoplasm. Functionally, the UvrABC repair system catalyzes the recognition and processing of DNA lesions. UvrC both incises the 5' and 3' sides of the lesion. The N-terminal half is responsible for the 3' incision and the C-terminal half is responsible for the 5' incision. This is UvrABC system protein C from Pseudoalteromonas atlantica (strain T6c / ATCC BAA-1087).